The primary structure comprises 366 residues: NAD(P)H-quinone oxidoreductase subunit 1, chloroplastic (366 aa).

The next 8 helical transmembrane spans lie at 29–49 (WITA…LVIV), 97–117 (LLFS…YLVI), 130–150 (IGVF…FMAG), 166–186 (VAQA…ISLL), 202–222 (FGFW…FLIA), 254–274 (FGLF…FVTV), 307–327 (VIIG…ISIV), and 340–360 (LLNL…LLTA).

The protein belongs to the complex I subunit 1 family. NDH is composed of at least 16 different subunits, 5 of which are encoded in the nucleus.

The protein resides in the plastid. Its subcellular location is the chloroplast thylakoid membrane. The catalysed reaction is a plastoquinone + NADH + (n+1) H(+)(in) = a plastoquinol + NAD(+) + n H(+)(out). The enzyme catalyses a plastoquinone + NADPH + (n+1) H(+)(in) = a plastoquinol + NADP(+) + n H(+)(out). NDH shuttles electrons from NAD(P)H:plastoquinone, via FMN and iron-sulfur (Fe-S) centers, to quinones in the photosynthetic chain and possibly in a chloroplast respiratory chain. The immediate electron acceptor for the enzyme in this species is believed to be plastoquinone. Couples the redox reaction to proton translocation, and thus conserves the redox energy in a proton gradient. This is NAD(P)H-quinone oxidoreductase subunit 1, chloroplastic from Anthoceros angustus (Hornwort).